Consider the following 427-residue polypeptide: Enolase (427 aa).

A (2R)-2-phosphoglycerate-binding site is contributed by Gln163. Glu205 acts as the Proton donor in catalysis. Mg(2+) is bound by residues Asp242, Glu285, and Asp312. (2R)-2-phosphoglycerate contacts are provided by Lys337, Arg366, Ser367, and Lys388. Lys337 acts as the Proton acceptor in catalysis.

It belongs to the enolase family. Mg(2+) serves as cofactor.

The protein localises to the cytoplasm. It is found in the secreted. The protein resides in the cell surface. It catalyses the reaction (2R)-2-phosphoglycerate = phosphoenolpyruvate + H2O. Its pathway is carbohydrate degradation; glycolysis; pyruvate from D-glyceraldehyde 3-phosphate: step 4/5. In terms of biological role, catalyzes the reversible conversion of 2-phosphoglycerate (2-PG) into phosphoenolpyruvate (PEP). It is essential for the degradation of carbohydrates via glycolysis. The protein is Enolase of Azorhizobium caulinodans (strain ATCC 43989 / DSM 5975 / JCM 20966 / LMG 6465 / NBRC 14845 / NCIMB 13405 / ORS 571).